A 968-amino-acid polypeptide reads, in one-letter code: RNA polymerase-associated protein RapA (968 aa).

Residues 163 to 332 (EVGRRFAPRV…FARLRLLDPD (170 aa)) enclose the Helicase ATP-binding domain. Position 176-183 (176-183 (DEVGLGKT)) interacts with ATP. A DEAH box motif is present at residues 278 to 281 (DEAH). In terms of domain architecture, Helicase C-terminal spans 491–645 (RVDWLIDFLK…TCPSGHILFN (155 aa)).

Belongs to the SNF2/RAD54 helicase family. RapA subfamily. Interacts with the RNAP. Has a higher affinity for the core RNAP than for the holoenzyme. Its ATPase activity is stimulated by binding to RNAP.

Functionally, transcription regulator that activates transcription by stimulating RNA polymerase (RNAP) recycling in case of stress conditions such as supercoiled DNA or high salt concentrations. Probably acts by releasing the RNAP, when it is trapped or immobilized on tightly supercoiled DNA. Does not activate transcription on linear DNA. Probably not involved in DNA repair. In Shewanella woodyi (strain ATCC 51908 / MS32), this protein is RNA polymerase-associated protein RapA.